We begin with the raw amino-acid sequence, 239 residues long: MSQFKSKEEAAESGVYIRKIQSFVKREGRLTKGQEKAIESNWETMGLEHKSGLLDMNEVFGRTAPVVLEIGFGMGKSLVTMAKNEPDKDFIGIEVHRPGIGACLADAQEQGVTNLRVYEHDAVEVLADCIADGSLSRMQLFFPDPWHKKRHHKRRIVQPEFVEKLRGKLAIGGVFHMATDWENYAEHMLEIMAVAPGYKNLSSTSDYVPRPEQRPLTKFEQRGHRLGHGVWDLMFERVA.

S-adenosyl-L-methionine is bound by residues Glu69, Glu94, Asp121, and Asp144. Asp144 is an active-site residue. Residues Lys148, Asp180, and 217–220 (TKFE) each bind substrate.

Belongs to the class I-like SAM-binding methyltransferase superfamily. TrmB family.

The catalysed reaction is guanosine(46) in tRNA + S-adenosyl-L-methionine = N(7)-methylguanosine(46) in tRNA + S-adenosyl-L-homocysteine. Its pathway is tRNA modification; N(7)-methylguanine-tRNA biosynthesis. In terms of biological role, catalyzes the formation of N(7)-methylguanine at position 46 (m7G46) in tRNA. This Pseudoalteromonas atlantica (strain T6c / ATCC BAA-1087) protein is tRNA (guanine-N(7)-)-methyltransferase.